Here is a 336-residue protein sequence, read N- to C-terminus: tRNA N6-adenosine threonylcarbamoyltransferase (336 aa).

Fe cation-binding residues include His114 and His118. Substrate-binding positions include 136-140, Asp169, Gly182, Asp186, and Asn275; that span reads LVSGG. Residue Asp301 coordinates Fe cation.

The protein belongs to the KAE1 / TsaD family. Fe(2+) is required as a cofactor.

The protein resides in the cytoplasm. It catalyses the reaction L-threonylcarbamoyladenylate + adenosine(37) in tRNA = N(6)-L-threonylcarbamoyladenosine(37) in tRNA + AMP + H(+). In terms of biological role, required for the formation of a threonylcarbamoyl group on adenosine at position 37 (t(6)A37) in tRNAs that read codons beginning with adenine. Is involved in the transfer of the threonylcarbamoyl moiety of threonylcarbamoyl-AMP (TC-AMP) to the N6 group of A37, together with TsaE and TsaB. TsaD likely plays a direct catalytic role in this reaction. The chain is tRNA N6-adenosine threonylcarbamoyltransferase from Streptococcus pneumoniae serotype 19F (strain G54).